The primary structure comprises 145 residues: uncharacterized protein (145 aa).

This is an uncharacterized protein from Deinococcus radiodurans (strain ATCC 13939 / DSM 20539 / JCM 16871 / CCUG 27074 / LMG 4051 / NBRC 15346 / NCIMB 9279 / VKM B-1422 / R1).